The chain runs to 404 residues: Argininosuccinate synthase (404 aa).

Residue 9 to 17 (AYSGGLDTS) participates in ATP binding. Y86 is a binding site for L-citrulline. Residue G116 coordinates ATP. T118, N122, and D123 together coordinate L-aspartate. L-citrulline is bound at residue N122. L-citrulline-binding residues include R126, S174, S183, E259, and Y271.

This sequence belongs to the argininosuccinate synthase family. Type 1 subfamily. As to quaternary structure, homotetramer.

It localises to the cytoplasm. It carries out the reaction L-citrulline + L-aspartate + ATP = 2-(N(omega)-L-arginino)succinate + AMP + diphosphate + H(+). The protein operates within amino-acid biosynthesis; L-arginine biosynthesis; L-arginine from L-ornithine and carbamoyl phosphate: step 2/3. In Listeria monocytogenes serovar 1/2a (strain ATCC BAA-679 / EGD-e), this protein is Argininosuccinate synthase.